The primary structure comprises 373 residues: Lipoyl synthase (373 aa).

A disordered region spans residues 14–36 (VSNDHPSSSPLQPGVKQSGEDKI). 7 residues coordinate [4Fe-4S] cluster: Cys-81, Cys-86, Cys-92, Cys-107, Cys-111, Cys-114, and Ser-323. Positions 93–312 (FSHGTATFMI…EEYGMALGFS (220 aa)) constitute a Radical SAM core domain. The disordered stretch occupies residues 346–373 (PAVSSTEHRERNTIASKSASKTESIHHR). Polar residues predominate over residues 358 to 367 (TIASKSASKT).

Belongs to the radical SAM superfamily. Lipoyl synthase family. The cofactor is [4Fe-4S] cluster.

The protein resides in the cytoplasm. The catalysed reaction is [[Fe-S] cluster scaffold protein carrying a second [4Fe-4S](2+) cluster] + N(6)-octanoyl-L-lysyl-[protein] + 2 oxidized [2Fe-2S]-[ferredoxin] + 2 S-adenosyl-L-methionine + 4 H(+) = [[Fe-S] cluster scaffold protein] + N(6)-[(R)-dihydrolipoyl]-L-lysyl-[protein] + 4 Fe(3+) + 2 hydrogen sulfide + 2 5'-deoxyadenosine + 2 L-methionine + 2 reduced [2Fe-2S]-[ferredoxin]. The protein operates within protein modification; protein lipoylation via endogenous pathway; protein N(6)-(lipoyl)lysine from octanoyl-[acyl-carrier-protein]: step 2/2. In terms of biological role, catalyzes the radical-mediated insertion of two sulfur atoms into the C-6 and C-8 positions of the octanoyl moiety bound to the lipoyl domains of lipoate-dependent enzymes, thereby converting the octanoylated domains into lipoylated derivatives. The sequence is that of Lipoyl synthase from Xylella fastidiosa (strain M23).